The following is a 166-amino-acid chain: Probable chemoreceptor glutamine deamidase CheD (166 aa).

The protein belongs to the CheD family.

The catalysed reaction is L-glutaminyl-[protein] + H2O = L-glutamyl-[protein] + NH4(+). Functionally, probably deamidates glutamine residues to glutamate on methyl-accepting chemotaxis receptors (MCPs), playing an important role in chemotaxis. The chain is Probable chemoreceptor glutamine deamidase CheD from Clostridium acetobutylicum (strain ATCC 824 / DSM 792 / JCM 1419 / IAM 19013 / LMG 5710 / NBRC 13948 / NRRL B-527 / VKM B-1787 / 2291 / W).